Consider the following 237-residue polypeptide: tRNA (guanine-N(7)-)-methyltransferase (237 aa).

Residues Glu67, Glu92, Asp119, and Asp142 each contribute to the S-adenosyl-L-methionine site. Asp142 is a catalytic residue. Residues Lys146, Asp178, and 215-218 contribute to the substrate site; that span reads TKFE.

Belongs to the class I-like SAM-binding methyltransferase superfamily. TrmB family.

It catalyses the reaction guanosine(46) in tRNA + S-adenosyl-L-methionine = N(7)-methylguanosine(46) in tRNA + S-adenosyl-L-homocysteine. It participates in tRNA modification; N(7)-methylguanine-tRNA biosynthesis. Catalyzes the formation of N(7)-methylguanine at position 46 (m7G46) in tRNA. The chain is tRNA (guanine-N(7)-)-methyltransferase from Aeromonas hydrophila subsp. hydrophila (strain ATCC 7966 / DSM 30187 / BCRC 13018 / CCUG 14551 / JCM 1027 / KCTC 2358 / NCIMB 9240 / NCTC 8049).